Reading from the N-terminus, the 1218-residue chain is Probable RNA-dependent RNA polymerase SHL2 (1218 aa).

It belongs to the RdRP family.

The catalysed reaction is RNA(n) + a ribonucleoside 5'-triphosphate = RNA(n+1) + diphosphate. Involved in the RNA silencing pathway. Probably required for the generation of small interfering RNAs (siRNAs). Regulates shoot apical meristem (SAM) initiation and maintenance and leaf polarization through the trans-acting siRNAS (ta-siRNAs) pathway which probably modulates the expression of the ARF2, ARF3, ARF4, ARF14 and ARF15 genes. This is Probable RNA-dependent RNA polymerase SHL2 (SHL2) from Oryza sativa subsp. japonica (Rice).